Reading from the N-terminus, the 430-residue chain is MEIKLKKTNYVSGVIEVPSDKSITHRAVMLSSLAEGNSIVRDYLPSDDCNRTIEAFRQMGVEIKIDNGSLYVKGAGLKLAKPQNGKYNIYAGNSGTTTRLLSGILAGQDFETVITGDDSLSKRPMRRVILPLSQMGANIKSNDGLLPLIIKGRNPLKELNYESDKSTAQVKSAILFAGLFADGATTYKEPVKSRDHSERMLKAFGVNIKVNGNFVTVYPAEKLIAQDITVPGDISSAAFFIAAALIVPDSNLTIRNVGVNPTRDGLIEVLKQMGADITLANMREISQEPVCDIVVKYSKLKAADIDASLVPRMVDEIPVFVLIATQADGITRISGAKELRVKESDRIESVTSQFKKLGAQIESLEDGFIINGNSKFNLAGTIVDSFDDHRIAMTLAIASLIAEGETIIRDSHCVDISFPGFYKVLNNICR.

3-phosphoshikimate-binding residues include Lys-21, Ser-22, and Arg-26. Lys-21 contributes to the phosphoenolpyruvate binding site. 2 residues coordinate phosphoenolpyruvate: Gly-95 and Arg-123. The 3-phosphoshikimate site is built by Thr-167, Gln-169, Asp-315, and Lys-342. Gln-169 is a phosphoenolpyruvate binding site. Asp-315 (proton acceptor) is an active-site residue. The phosphoenolpyruvate site is built by Arg-346 and Arg-390.

Belongs to the EPSP synthase family. As to quaternary structure, monomer.

Its subcellular location is the cytoplasm. The enzyme catalyses 3-phosphoshikimate + phosphoenolpyruvate = 5-O-(1-carboxyvinyl)-3-phosphoshikimate + phosphate. The protein operates within metabolic intermediate biosynthesis; chorismate biosynthesis; chorismate from D-erythrose 4-phosphate and phosphoenolpyruvate: step 6/7. In terms of biological role, catalyzes the transfer of the enolpyruvyl moiety of phosphoenolpyruvate (PEP) to the 5-hydroxyl of shikimate-3-phosphate (S3P) to produce enolpyruvyl shikimate-3-phosphate and inorganic phosphate. This Endomicrobium trichonymphae protein is 3-phosphoshikimate 1-carboxyvinyltransferase.